We begin with the raw amino-acid sequence, 875 residues long: Alanine--tRNA ligase (875 aa).

Residues H564, H568, C666, and H670 each contribute to the Zn(2+) site.

This sequence belongs to the class-II aminoacyl-tRNA synthetase family. In terms of assembly, homotetramer. It depends on Zn(2+) as a cofactor.

The protein localises to the cytoplasm. It carries out the reaction tRNA(Ala) + L-alanine + ATP = L-alanyl-tRNA(Ala) + AMP + diphosphate. Its function is as follows. Catalyzes the attachment of alanine to tRNA(Ala) in a two-step reaction: alanine is first activated by ATP to form Ala-AMP and then transferred to the acceptor end of tRNA(Ala). Also edits incorrectly charged Ser-tRNA(Ala) and Gly-tRNA(Ala) via its editing domain. The polypeptide is Alanine--tRNA ligase (Enterobacter sp. (strain 638)).